Consider the following 364-residue polypeptide: MAQQWSLQRLAGRHPQDSYEDSTQSSIFTYTNSNSTRGPFEGPNYHIAPRWVYHLTSVWMIFVVIASVFTNGLVLAATMKFKKLRHPLNWILVNLAVADLAETVIASTISVVNQVYGYFVLGHPMCVLEGYTVSLCGITGLWSLAIISWERWMVVCKPFGNVRFDAKLAIVGIAFSWIWAAVWTAPPIFGWSRYWPHGLKTSCGPDVFSGSSYPGVQSYMIVLMVTCCITPLSIIVLCYLQVWLAIRAVAKQQKESESTQKAEKEVTRMVVVMVLAFCFCWGPYAFFACFAAANPGYPFHPLMAALPAFFAKSATIYNPVIYVFMNRQFRNCILQLFGKKVDDGSELSSASKTEVSSVSSVSPA.

A disordered region spans residues 1 to 23; that stretch reads MAQQWSLQRLAGRHPQDSYEDST. Topologically, residues 1–52 are extracellular; that stretch reads MAQQWSLQRLAGRHPQDSYEDSTQSSIFTYTNSNSTRGPFEGPNYHIAPRWV. Residues 17-43 form a required for 11-cis-retinal regeneration region; that stretch reads DSYEDSTQSSIFTYTNSNSTRGPFEGP. The N-linked (GlcNAc...) asparagine glycan is linked to N34. Residues 53–77 traverse the membrane as a helical segment; it reads YHLTSVWMIFVVIASVFTNGLVLAA. The Cytoplasmic segment spans residues 78 to 89; sequence TMKFKKLRHPLN. Residues 90 to 115 form a helical membrane-spanning segment; sequence WILVNLAVADLAETVIASTISVVNQV. Topologically, residues 116 to 129 are extracellular; sequence YGYFVLGHPMCVLE. Cysteines 126 and 203 form a disulfide. The chain crosses the membrane as a helical span at residues 130–149; it reads GYTVSLCGITGLWSLAIISW. Residues 150–168 are Cytoplasmic-facing; the sequence is ERWMVVCKPFGNVRFDAKL. A helical transmembrane segment spans residues 169–192; it reads AIVGIAFSWIWAAVWTAPPIFGWS. Residues 193–218 lie on the Extracellular side of the membrane; it reads RYWPHGLKTSCGPDVFSGSSYPGVQS. A helical membrane pass occupies residues 219–246; that stretch reads YMIVLMVTCCITPLSIIVLCYLQVWLAI. Residues 247-268 are Cytoplasmic-facing; the sequence is RAVAKQQKESESTQKAEKEVTR. The chain crosses the membrane as a helical span at residues 269-292; it reads MVVVMVLAFCFCWGPYAFFACFAA. Residues 293 to 300 are Extracellular-facing; it reads ANPGYPFH. A helical transmembrane segment spans residues 301–325; sequence PLMAALPAFFAKSATIYNPVIYVFM. The residue at position 312 (K312) is an N6-(retinylidene)lysine. The Cytoplasmic portion of the chain corresponds to 326–364; sequence NRQFRNCILQLFGKKVDDGSELSSASKTEVSSVSSVSPA.

It belongs to the G-protein coupled receptor 1 family. Opsin subfamily. Post-translationally, N-glycosylated. O-glycosylated. Phosphorylated on some or all of the serine and threonine residues present in the C-terminal region.

The protein localises to the cell membrane. In terms of biological role, visual pigments are the light-absorbing molecules that mediate vision. They consist of an apoprotein, opsin, covalently linked to cis-retinal. This is Medium-wave-sensitive opsin 2 from Homo sapiens (Human).